The following is a 282-amino-acid chain: D-alanine aminotransferase (282 aa).

Position 32 (Tyr32) interacts with substrate. Arg51 provides a ligand contact to pyridoxal 5'-phosphate. Arg99 and His101 together coordinate substrate. Residue Lys146 is the Proton acceptor of the active site. Lys146 bears the N6-(pyridoxal phosphate)lysine mark. Pyridoxal 5'-phosphate is bound at residue Glu178.

It belongs to the class-IV pyridoxal-phosphate-dependent aminotransferase family. Homodimer. Pyridoxal 5'-phosphate is required as a cofactor.

The catalysed reaction is D-alanine + 2-oxoglutarate = D-glutamate + pyruvate. Functionally, acts on the D-isomers of alanine, leucine, aspartate, glutamate, aminobutyrate, norvaline and asparagine. The enzyme transfers an amino group from a substrate D-amino acid to the pyridoxal phosphate cofactor to form pyridoxamine and an alpha-keto acid in the first half-reaction. The second half-reaction is the reverse of the first, transferring the amino group from the pyridoxamine to a second alpha-keto acid to form the product D-amino acid via a ping-pong mechanism. This is an important process in the formation of D-alanine and D-glutamate, which are essential bacterial cell wall components. The sequence is that of D-alanine aminotransferase (dat) from Staphylococcus aureus (strain COL).